The following is a 249-amino-acid chain: Carbohydrate deacetylase (249 aa).

The Mg(2+) site is built by histidine 60 and histidine 125.

Belongs to the YdjC deacetylase family. Homodimer. Mg(2+) is required as a cofactor.

In terms of biological role, probably catalyzes the deacetylation of acetylated carbohydrates an important step in the degradation of oligosaccharides. The chain is Carbohydrate deacetylase from Thermoanaerobacter pseudethanolicus (strain ATCC 33223 / 39E) (Clostridium thermohydrosulfuricum).